A 590-amino-acid polypeptide reads, in one-letter code: Multidrug resistance-like ATP-binding protein MdlA (590 aa).

Positions 18-303 (YLGAVALLVI…LAWMFNIVER (286 aa)) constitute an ABC transmembrane type-1 domain. The next 6 helical transmembrane spans lie at 23-43 (ALLV…GIVV), 53-73 (TGQI…VYLL), 134-154 (GVLT…MMST), 155-175 (QISW…AIMI), 248-268 (IYIA…WMVV), and 280-300 (FMMY…MFNI). Residues 337–570 (VNIHQFTYPQ…SGWYRDMYRY (234 aa)) form the ABC transporter domain. 369–376 (GPTGSGKS) lines the ATP pocket.

It belongs to the ABC transporter superfamily. Drug exporter-2 (TC 3.A.1.117) family.

Its subcellular location is the cell inner membrane. It catalyses the reaction ATP + H2O + xenobioticSide 1 = ADP + phosphate + xenobioticSide 2.. The sequence is that of Multidrug resistance-like ATP-binding protein MdlA (mdlA) from Escherichia coli (strain K12).